A 433-amino-acid chain; its full sequence is GTPase Der (433 aa).

2 consecutive EngA-type G domains span residues lysine 5–asparagine 167 and isoleucine 174–glutamate 349. GTP is bound by residues glycine 11 to serine 18, aspartate 58 to phenylalanine 62, asparagine 119 to aspartate 122, glycine 180 to serine 187, aspartate 227 to isoleucine 231, and serine 292 to aspartate 295. In terms of domain architecture, KH-like spans phenylalanine 350–isoleucine 429.

The protein belongs to the TRAFAC class TrmE-Era-EngA-EngB-Septin-like GTPase superfamily. EngA (Der) GTPase family. In terms of assembly, associates with the 50S ribosomal subunit.

In terms of biological role, GTPase that plays an essential role in the late steps of ribosome biogenesis. The polypeptide is GTPase Der (Borreliella afzelii (strain PKo) (Borrelia afzelii)).